A 95-amino-acid chain; its full sequence is DNA-binding protein CENSYa_1764 (95 aa).

The segment at 1–21 (MSYTDPDDSLPEHVPGEAEMS) is disordered.

This sequence belongs to the PDCD5 family.

The protein is DNA-binding protein CENSYa_1764 of Cenarchaeum symbiosum (strain A).